A 185-amino-acid chain; its full sequence is Ribosome-recycling factor (185 aa).

It belongs to the RRF family.

It localises to the cytoplasm. Its function is as follows. Responsible for the release of ribosomes from messenger RNA at the termination of protein biosynthesis. May increase the efficiency of translation by recycling ribosomes from one round of translation to another. The protein is Ribosome-recycling factor of Corynebacterium glutamicum (strain R).